Reading from the N-terminus, the 187-residue chain is MPEVERKSKITASRKLMLKSLMLAKAKECWEQEHEEREAEKVRYLSERIPTLQTRGLSLSALQDLCRELHAKVEVVDEERYDIEAKCLHNTREIKDLKLKVLDLRGKFKRPPLRRVRVSADAMLRALLGSKHKVSMDLRANLKSVKKEDTEKERPVEVGDWRKNVEAMSGMEGRKKMFDAAKSPTSQ.

Residue Pro-2 is modified to N-acetylproline. Residues 2–48 (PEVERKSKITASRKLMLKSLMLAKAKECWEQEHEEREAEKVRYLSER) form an involved in binding TNC region. The residue at position 58 (Ser-58) is a Phosphoserine. The involved in binding TNC and actin stretch occupies residues 97–118 (LKLKVLDLRGKFKRPPLRRVRV).

It belongs to the troponin I family. Binds to actin and tropomyosin.

Troponin I is the inhibitory subunit of troponin, the thin filament regulatory complex which confers calcium-sensitivity to striated muscle actomyosin ATPase activity. In Mus musculus (Mouse), this protein is Troponin I, slow skeletal muscle (Tnni1).